Here is a 707-residue protein sequence, read N- to C-terminus: Protein O-mannosyl-transferase TMEM260 (707 aa).

8 helical membrane-spanning segments follow: residues 28–48, 71–91, 94–114, 141–161, 189–209, 222–242, 318–338, and 356–376; these read GGVAVFAAVAAVFTFTLPPSV, YPLFTLVAKLAITLFPFGSIA, VNLLCGLFGAVAASLLFFTVF, IAAEVFSLNNLFVGLLMALTV, NQHTIILYVLCIIPWILFQLL, LSLYFSAGLLPYVHLPISSYL, NPSLVWLFTGMFCIYSLFFAW, and FWMQSNAVVAVLAGIGLAAVV. Over 377–707 the chain is Lumenal; that stretch reads SETNRVLNSN…LQSLRNRKNV (331 aa). N-linked (GlcNAc...) asparagine glycans are attached at residues Asn407, Asn535, and Asn568.

This sequence belongs to the glycosyltransferase 117 (GT117) family. As to expression, expressed in brain, heart, kidney, liver, lung, pancreas and placenta but are not detected in skeletal muscle.

The protein localises to the endoplasmic reticulum membrane. Its subcellular location is the membrane. The catalysed reaction is a di-trans,poly-cis-dolichyl beta-D-mannosyl phosphate + L-seryl-[protein] = 3-O-(alpha-D-mannosyl)-L-seryl-[protein] + a di-trans,poly-cis-dolichyl phosphate + H(+). It carries out the reaction a di-trans,poly-cis-dolichyl beta-D-mannosyl phosphate + L-threonyl-[protein] = 3-O-(alpha-D-mannosyl)-L-threonyl-[protein] + a di-trans,poly-cis-dolichyl phosphate + H(+). Functionally, O-mannosyl-transferase that transfers mannosyl residues to the hydroxyl group of serine or threonine residues of proteins. Specifically glycosylates the IPT/TIG domain of target proteins, such as MET and MST1R/RON. TMEM260-mediated O-mannosylated residues are composed of single mannose glycans that are not elongated or modified. This chain is Protein O-mannosyl-transferase TMEM260, found in Homo sapiens (Human).